Reading from the N-terminus, the 344-residue chain is HTH-type transcriptional repressor MelR (344 aa).

One can recognise an HTH lacI-type domain in the interval 2 to 58 (VRIKDIALKAKVSSATVSRILNEDESLSVAGETRQRVINIAEELGYQTVAKRRKSRG). The H-T-H motif DNA-binding region spans 4–23 (IKDIALKAKVSSATVSRILN).

Its subcellular location is the cytoplasm. Functionally, represses the melibiose operon melREDCA in the absence of melibiose or raffinose. Binds to two binding sites at the promoter region of the operon. The polypeptide is HTH-type transcriptional repressor MelR (Bacillus subtilis (strain 168)).